The primary structure comprises 336 residues: Glycerol-3-phosphate dehydrogenase [NAD(P)+] (336 aa).

NADPH is bound by residues Ser-11, Trp-12, Arg-32, and Lys-106. 2 residues coordinate sn-glycerol 3-phosphate: Lys-106 and Gly-136. Position 140 (Ala-140) interacts with NADPH. Sn-glycerol 3-phosphate contacts are provided by Lys-191, Asp-244, Ser-254, Arg-255, and Asn-256. Residue Lys-191 is the Proton acceptor of the active site. Residue Arg-255 participates in NADPH binding. 2 residues coordinate NADPH: Val-279 and Glu-281.

The protein belongs to the NAD-dependent glycerol-3-phosphate dehydrogenase family.

The protein localises to the cytoplasm. It carries out the reaction sn-glycerol 3-phosphate + NAD(+) = dihydroxyacetone phosphate + NADH + H(+). The enzyme catalyses sn-glycerol 3-phosphate + NADP(+) = dihydroxyacetone phosphate + NADPH + H(+). It participates in membrane lipid metabolism; glycerophospholipid metabolism. In terms of biological role, catalyzes the reduction of the glycolytic intermediate dihydroxyacetone phosphate (DHAP) to sn-glycerol 3-phosphate (G3P), the key precursor for phospholipid synthesis. In Frankia casuarinae (strain DSM 45818 / CECT 9043 / HFP020203 / CcI3), this protein is Glycerol-3-phosphate dehydrogenase [NAD(P)+].